Reading from the N-terminus, the 291-residue chain is G1/S-specific cyclin-D1 (291 aa).

Thr282 bears the Phosphothreonine mark.

Belongs to the cyclin family. Cyclin D subfamily. In terms of assembly, interacts with the cdk4 and cdk6 protein kinases to form a serine/threonine kinase holoenzyme complex. The cyclin subunit imparts substrate specificity to the complex. Phosphorylation at Thr-282 by MAP kinases is required for ubiquitination and degradation by the DCX(AMBRA1) complex. In terms of processing, ubiquitinated by the DCX(AMBRA1) complex during the transition from G1 to S cell phase, leading to its degradation. The DCX(AMBRA1) complex represents the major regulator of CCND1 stability during the G1/S transition.

It localises to the nucleus. Its subcellular location is the cytoplasm. Its function is as follows. Regulatory component of the cyclin D1-CDK4 (DC) complex that phosphorylates and inhibits members of the retinoblastoma (RB) protein family including RB1 and regulates the cell-cycle during G(1)/S transition. Phosphorylation of RB1 allows dissociation of the transcription factor E2F from the RB/E2F complex and the subsequent transcription of E2F target genes which are responsible for the progression through the G(1) phase. Hypophosphorylates RB1 in early G(1) phase. Cyclin D-CDK4 complexes are major integrators of various mitogenenic and antimitogenic signals. This chain is G1/S-specific cyclin-D1 (ccnd1), found in Xenopus laevis (African clawed frog).